The primary structure comprises 577 residues: Calcium-dependent protein kinase 22 (577 aa).

Gly-2 carries N-myristoyl glycine lipidation. Residues 105 to 368 (YRLGAELGRG…AKEVLEHPWL (264 aa)) enclose the Protein kinase domain. Residues 111–119 (LGRGEFGVT) and Lys-134 contribute to the ATP site. Asp-234 acts as the Proton acceptor in catalysis. An autoinhibitory domain region spans residues 374 to 404 (APNVSLGEIVRSRLMQFSAMNKFKKKALGVV). EF-hand domains are found at residues 411–446 (EEMD…NGHP), 447–482 (VPET…IKKM), 483–518 (SNEE…ELGP), and 520–553 (EQVV…GSDW). Ca(2+) is bound by residues Asp-424, Asp-426, Ser-428, Asn-430, Asp-435, Asp-460, Asp-462, Asn-464, Thr-466, Glu-471, Asp-496, Asp-498, Asn-500, Glu-507, Asp-531, Asp-533, Asp-535, Arg-537, and Glu-542.

It belongs to the protein kinase superfamily. Ser/Thr protein kinase family. CDPK subfamily.

The protein resides in the membrane. The catalysed reaction is L-seryl-[protein] + ATP = O-phospho-L-seryl-[protein] + ADP + H(+). The enzyme catalyses L-threonyl-[protein] + ATP = O-phospho-L-threonyl-[protein] + ADP + H(+). With respect to regulation, activated by calcium. Autophosphorylation may play an important role in the regulation of the kinase activity. Its function is as follows. May play a role in signal transduction pathways that involve calcium as a second messenger. In Oryza sativa subsp. japonica (Rice), this protein is Calcium-dependent protein kinase 22.